Reading from the N-terminus, the 366-residue chain is tRNA/tmRNA (uracil-C(5))-methyltransferase (366 aa).

5 residues coordinate S-adenosyl-L-methionine: glutamine 190, tyrosine 218, asparagine 223, glutamate 239, and aspartate 299. Residue cysteine 324 is the Nucleophile of the active site. The active-site Proton acceptor is the glutamate 358.

Belongs to the class I-like SAM-binding methyltransferase superfamily. RNA M5U methyltransferase family. TrmA subfamily.

The enzyme catalyses uridine(54) in tRNA + S-adenosyl-L-methionine = 5-methyluridine(54) in tRNA + S-adenosyl-L-homocysteine + H(+). The catalysed reaction is uridine(341) in tmRNA + S-adenosyl-L-methionine = 5-methyluridine(341) in tmRNA + S-adenosyl-L-homocysteine + H(+). In terms of biological role, dual-specificity methyltransferase that catalyzes the formation of 5-methyluridine at position 54 (m5U54) in all tRNAs, and that of position 341 (m5U341) in tmRNA (transfer-mRNA). The chain is tRNA/tmRNA (uracil-C(5))-methyltransferase from Salmonella arizonae (strain ATCC BAA-731 / CDC346-86 / RSK2980).